The chain runs to 203 residues: Small ribosomal subunit protein uS4 (203 aa).

The S4 RNA-binding domain occupies 93 to 156; that stretch reads QRLDNVVFRL…MKVPAILEAV (64 aa).

It belongs to the universal ribosomal protein uS4 family. Part of the 30S ribosomal subunit. Contacts protein S5. The interaction surface between S4 and S5 is involved in control of translational fidelity.

Its function is as follows. One of the primary rRNA binding proteins, it binds directly to 16S rRNA where it nucleates assembly of the body of the 30S subunit. Functionally, with S5 and S12 plays an important role in translational accuracy. The sequence is that of Small ribosomal subunit protein uS4 from Lactococcus lactis subsp. lactis (strain IL1403) (Streptococcus lactis).